Here is a 371-residue protein sequence, read N- to C-terminus: RT1 class I histocompatibility antigen, AA alpha chain (371 aa).

A signal peptide spans 1 to 24 (MEAMAPRTLLLLLAAALAPTQTRA). The tract at residues 25-114 (GSHSLRYFYT…LRGYYNQSEG (90 aa)) is alpha-1. At 25–311 (GSHSLRYFYT…PSTDSNMETT (287 aa)) the chain is on the extracellular side. Asn-110 carries an N-linked (GlcNAc...) asparagine glycan. Positions 115–206 (GSHTIQEMYG…ELGKETLLRS (92 aa)) are alpha-2. The alpha-3 stretch occupies residues 207–298 (DPPEAHVTLH…GLPKPLSQRW (92 aa)). An Ig-like C1-type domain is found at 209-295 (PEAHVTLHPR…EHEGLPKPLS (87 aa)). A glycan (N-linked (GlcNAc...) asparagine) is linked at Asn-280. Positions 299-311 (EPSPSTDSNMETT) are connecting peptide. The chain crosses the membrane as a helical span at residues 312-336 (VIYVILGAVAMIGAVAIIGAMVAVV). At 337-371 (RRRKRNTGGKGGDYAPAPGRDSSQSSDVSLPDCKA) the chain is on the cytoplasmic side. The tract at residues 342-371 (NTGGKGGDYAPAPGRDSSQSSDVSLPDCKA) is disordered. Residues Ser-362 and Ser-365 each carry the phosphoserine modification.

Belongs to the MHC class I family. Heterodimer of an alpha chain and a beta chain (beta-2-microglobulin).

The protein localises to the membrane. In terms of biological role, involved in the presentation of foreign antigens to the immune system. The polypeptide is RT1 class I histocompatibility antigen, AA alpha chain (Rattus norvegicus (Rat)).